We begin with the raw amino-acid sequence, 158 residues long: Protein hunchback (158 aa).

Basic residues predominate over residues 18 to 34 (HNHHHHHHHGHHQHQQR). 2 disordered regions span residues 18-96 (HNHH…TTTA) and 118-158 (LTPP…KYMA). A compositionally biased stretch (polar residues) spans 41-50 (ASSPHQSPLP). Positions 52-65 (LQLEQYLKQQQQQP) are enriched in low complexity. A compositionally biased stretch (basic and acidic residues) spans 139–158 (EPEKEHDLMSNSSEDMKYMA).

Belongs to the hunchback C2H2-type zinc-finger protein family.

The protein localises to the nucleus. Gap class segmentation protein that controls development of head structures. This chain is Protein hunchback (hb), found in Drosophila mimica (Fruit fly).